Here is a 491-residue protein sequence, read N- to C-terminus: Glutamyl-tRNA(Gln) amidotransferase subunit A (491 aa).

Residues Lys78 and Ser158 each act as charge relay system in the active site. The Acyl-ester intermediate role is filled by Ser182.

This sequence belongs to the amidase family. GatA subfamily. In terms of assembly, heterotrimer of A, B and C subunits.

It carries out the reaction L-glutamyl-tRNA(Gln) + L-glutamine + ATP + H2O = L-glutaminyl-tRNA(Gln) + L-glutamate + ADP + phosphate + H(+). Functionally, allows the formation of correctly charged Gln-tRNA(Gln) through the transamidation of misacylated Glu-tRNA(Gln) in organisms which lack glutaminyl-tRNA synthetase. The reaction takes place in the presence of glutamine and ATP through an activated gamma-phospho-Glu-tRNA(Gln). This Nitrobacter hamburgensis (strain DSM 10229 / NCIMB 13809 / X14) protein is Glutamyl-tRNA(Gln) amidotransferase subunit A.